The sequence spans 338 residues: Putative peptide import ATP-binding protein BOV_A0348 (338 aa).

Residues 10 to 263 (KGLRTVFRTR…PRHPYTMGLL (254 aa)) enclose the ABC transporter domain. ATP is bound at residue 43-50 (GESGSGKS).

It belongs to the ABC transporter superfamily. The complex is composed of two ATP-binding proteins (BOV_A0347 and BOV_A0348), two transmembrane proteins (BOV_A0350 and BOV_A0351) and a solute-binding protein (BOV_A0352).

It is found in the cell inner membrane. Functionally, probably part of an ABC transporter complex that could be involved in peptide import. Probably responsible for energy coupling to the transport system. This chain is Putative peptide import ATP-binding protein BOV_A0348, found in Brucella ovis (strain ATCC 25840 / 63/290 / NCTC 10512).